Reading from the N-terminus, the 510-residue chain is Tryptophan 6-hydroxylase fscE (510 aa).

A helical membrane pass occupies residues 11–31; the sequence is LLPIEGVIILVFVLSCFSLAI. Cys-452 is a binding site for heme.

The protein belongs to the cytochrome P450 family. Requires heme as cofactor.

It is found in the membrane. It functions in the pathway secondary metabolite biosynthesis. In terms of biological role, tryptophan 6-hydroxylase; part of the fragmented gene cluster that mediates the biosynthesis of fusarochromene, a tryptophan-derived metabolite closely related to a group of mycotoxins including fusarochromanone. Within the pathway, fscE hydroxalates the first intermediate D-tryptophan to yield 6-hydroxytryptophan. The first step of the pathway is the epimerization of L-tryptophan to D-tryptophan in the presence of the NRPS-like tryptophan epimerase fscC. D-tryptophan is subsequently hydroxylated by the tryptophan 6-hydroxylase fscE to yield 6-hydroxytryptophan. The pyrrole ring undergoes cleavaged by the tryptophan 2,3-dioxygenase fscD and is finally converted to 4-hydroxykyrunenine by the hydrolase fscH. The NRPS-like oxidoreductase fscA reduces the carboxyl group to primary alcohol and the DMATS-type prenyltransferase fscG performs prenylation, followed by the formation of a chromene ring catalyzed by the oxidoreductase fscI, which leads to desacetylfusarochromene. Epoxidation by fscF and rearrangement reactions of chromene double bonds convert compound desacetylfusarochromene to fusarochromanones. Although specific acetyltransferases were not found near the fsc gene cluster, several predicted enzymes containing the N-acetyltransferase superfamily domain are present in the genome of F.equiseti. These predicted enzymes may have the potential to convert desacetylfusarochromene to fusarochromene. The sequence is that of Tryptophan 6-hydroxylase fscE from Fusarium equiseti (Fusarium scirpi).